Consider the following 491-residue polypeptide: Rab5 GDP/GTP exchange factor (491 aa).

Residues 1–74 (MSLKSERRGI…EEEAFASSQS (74 aa)) are interaction with ubiquitinated proteins. The A20-type zinc finger occupies 13-47 (DQSELLCKKGCGYYGNPAWQGFCSKCWREEYHKAR). Zn(2+) is bound by residues cysteine 19, cysteine 23, cysteine 35, and cysteine 38. Positions 66 to 85 (EEAFASSQSSQGAQSLTFSK) are disordered. Residues 69–84 (FASSQSSQGAQSLTFS) show a composition bias toward low complexity. Phosphoserine is present on residues serine 124 and serine 132. N6-acetyllysine occurs at positions 151 and 170. Residues 232–375 (EKKDLAIQKR…IEKLDAQSLN (144 aa)) form the VPS9 domain. A phosphoserine mark is found at serine 373, serine 377, and serine 390. Positions 407–448 (VKQMYKNLDLLSQLNERQERIMNEAKKLEKDLIDWTDGIAKE) form a coiled coil. The segment at 462 to 491 (PPNQPLAAIDSENVENDKLPPPLQPQVYAG) is disordered.

As to quaternary structure, heterodimer with RABEP1. The heterodimer binds RAB4A and RAB5A that have been activated by GTP-binding. Binds TSC2, GGA1, GGA2, GGA3, AP1G1 and AP1G2. Interacts with RAB21, and with 100-fold lower affinity also with RAB22. Interacts with ubiquitinated EGFR. Interacts with RGS14; the interaction is GTP-dependent. In terms of processing, monoubiquitinated. As to expression, expressed in the white matter tracts of the cerebellum, the fimbria hippocampi and the corpus callosum.

It localises to the cytoplasm. Its subcellular location is the early endosome. The protein resides in the recycling endosome. Functionally, rab effector protein acting as linker between gamma-adaptin, RAB4A or RAB5A. Involved in endocytic membrane fusion and membrane trafficking of recycling endosomes. Stimulates nucleotide exchange on RAB5A. Can act as a ubiquitin ligase. The protein is Rab5 GDP/GTP exchange factor (Rabgef1) of Mus musculus (Mouse).